The sequence spans 453 residues: Bifunctional protein GlmU (453 aa).

The pyrophosphorylase stretch occupies residues 1–225 (MNIVILAAGT…EWETLGVNSK (225 aa)). Residues 6-9 (LAAG), lysine 20, glutamine 71, 76-77 (GT), 98-100 (YGD), glycine 135, glutamate 150, asparagine 165, and asparagine 223 contribute to the UDP-N-acetyl-alpha-D-glucosamine site. Mg(2+) is bound at residue aspartate 100. Asparagine 223 is a binding site for Mg(2+). Residues 226-246 (AQLAELERIHQRNVADALLVD) form a linker region. The interval 247–453 (GVTLADPARV…GYVRPVKKKS (207 aa)) is N-acetyltransferase. Arginine 329 and lysine 347 together coordinate UDP-N-acetyl-alpha-D-glucosamine. Histidine 359 acts as the Proton acceptor in catalysis. UDP-N-acetyl-alpha-D-glucosamine is bound by residues tyrosine 362 and asparagine 373. Acetyl-CoA contacts are provided by residues alanine 376, 382 to 383 (NY), serine 401, and alanine 419.

This sequence in the N-terminal section; belongs to the N-acetylglucosamine-1-phosphate uridyltransferase family. In the C-terminal section; belongs to the transferase hexapeptide repeat family. In terms of assembly, homotrimer. It depends on Mg(2+) as a cofactor.

The protein localises to the cytoplasm. It catalyses the reaction alpha-D-glucosamine 1-phosphate + acetyl-CoA = N-acetyl-alpha-D-glucosamine 1-phosphate + CoA + H(+). The enzyme catalyses N-acetyl-alpha-D-glucosamine 1-phosphate + UTP + H(+) = UDP-N-acetyl-alpha-D-glucosamine + diphosphate. It participates in nucleotide-sugar biosynthesis; UDP-N-acetyl-alpha-D-glucosamine biosynthesis; N-acetyl-alpha-D-glucosamine 1-phosphate from alpha-D-glucosamine 6-phosphate (route II): step 2/2. It functions in the pathway nucleotide-sugar biosynthesis; UDP-N-acetyl-alpha-D-glucosamine biosynthesis; UDP-N-acetyl-alpha-D-glucosamine from N-acetyl-alpha-D-glucosamine 1-phosphate: step 1/1. The protein operates within bacterial outer membrane biogenesis; LPS lipid A biosynthesis. In terms of biological role, catalyzes the last two sequential reactions in the de novo biosynthetic pathway for UDP-N-acetylglucosamine (UDP-GlcNAc). The C-terminal domain catalyzes the transfer of acetyl group from acetyl coenzyme A to glucosamine-1-phosphate (GlcN-1-P) to produce N-acetylglucosamine-1-phosphate (GlcNAc-1-P), which is converted into UDP-GlcNAc by the transfer of uridine 5-monophosphate (from uridine 5-triphosphate), a reaction catalyzed by the N-terminal domain. The polypeptide is Bifunctional protein GlmU (Burkholderia ambifaria (strain ATCC BAA-244 / DSM 16087 / CCUG 44356 / LMG 19182 / AMMD) (Burkholderia cepacia (strain AMMD))).